A 100-amino-acid chain; its full sequence is MELTPRDKDKLMLFTAGLLAERRKAKGLKLNYPEAIALITCAIMEGAREGRTVAEMMALGREMLTRDDVMEGIAEMIQDVQVEATFPDGTKLVTVHNPIV.

The protein belongs to the urease gamma subunit family. Heterotrimer of UreA (gamma), UreB (beta) and UreC (alpha) subunits. Three heterotrimers associate to form the active enzyme.

It localises to the cytoplasm. The enzyme catalyses urea + 2 H2O + H(+) = hydrogencarbonate + 2 NH4(+). Its pathway is nitrogen metabolism; urea degradation; CO(2) and NH(3) from urea (urease route): step 1/1. This is Urease subunit gamma from Pseudoalteromonas translucida (strain TAC 125).